A 445-amino-acid chain; its full sequence is MDIKQVTETIAMIEEQNFDVRTITMGISLLDCIDSDIDKAAEKVYNKIVSKAKNLVAVGDEIAAELGIPIVNKRVSVTPISIIGAATDATDYVPFARALDRAAKEIGINFIGGFSALVQKGYQKGDEILIDSIPRALAETDFVCSSVNIGSTKTGINMTAVRDMGRIIKEASEADPMGPGKLVVFANAVEDNPFMAGAFHGVGEADVVINVGVSGPGVVQRAVEKVPGESFDVLAETVKKTAFKITRVGQLVGQMASERLGVEFGIVDLSLAPTPAVGDSVARVLEAMGLEVVGTHGTTAALALLNDQVKKGGIMACNQVGGLSGAFIPVSEDEGMIAAVQSGHINLEKLEAMTAICSVGLDMIAIPADTPDTTIAAMIADEAAIGVINQKTTAVRIIPYGKEGDMLELGGLLGYAPVMKVNKASSADFIARGGQIPAPVHSFKN.

Belongs to the UPF0210 family. Homodimer.

The protein is UPF0210 protein STER_0157 of Streptococcus thermophilus (strain ATCC BAA-491 / LMD-9).